A 268-amino-acid polypeptide reads, in one-letter code: Glucosamine-6-phosphate deaminase (268 aa).

Catalysis depends on D72, which acts as the Proton acceptor; for enolization step. D141 (for ring-opening step) is an active-site residue. Residue H143 is the Proton acceptor; for ring-opening step of the active site. Catalysis depends on E148, which acts as the For ring-opening step.

It belongs to the glucosamine/galactosamine-6-phosphate isomerase family. NagB subfamily.

The catalysed reaction is alpha-D-glucosamine 6-phosphate + H2O = beta-D-fructose 6-phosphate + NH4(+). Its pathway is amino-sugar metabolism; N-acetylneuraminate degradation; D-fructose 6-phosphate from N-acetylneuraminate: step 5/5. Its activity is regulated as follows. Allosterically activated by N-acetylglucosamine 6-phosphate (GlcNAc6P). Its function is as follows. Catalyzes the reversible isomerization-deamination of glucosamine 6-phosphate (GlcN6P) to form fructose 6-phosphate (Fru6P) and ammonium ion. The sequence is that of Glucosamine-6-phosphate deaminase from Borreliella afzelii (strain PKo) (Borrelia afzelii).